The following is a 400-amino-acid chain: tRNA-specific 2-thiouridylase MnmA (400 aa).

ATP-binding positions include 19–26 (AMSGGVDS) and leucine 45. Residue cysteine 113 is the Nucleophile of the active site. Cysteine 113 and cysteine 210 are joined by a disulfide. Glycine 137 serves as a coordination point for ATP. Positions 160 to 162 (RDQ) are interaction with tRNA. Catalysis depends on cysteine 210, which acts as the Cysteine persulfide intermediate.

The protein belongs to the MnmA/TRMU family.

It is found in the cytoplasm. It carries out the reaction S-sulfanyl-L-cysteinyl-[protein] + uridine(34) in tRNA + AH2 + ATP = 2-thiouridine(34) in tRNA + L-cysteinyl-[protein] + A + AMP + diphosphate + H(+). Catalyzes the 2-thiolation of uridine at the wobble position (U34) of tRNA, leading to the formation of s(2)U34. This chain is tRNA-specific 2-thiouridylase MnmA, found in Nitrobacter hamburgensis (strain DSM 10229 / NCIMB 13809 / X14).